The primary structure comprises 525 residues: Phosphoenolpyruvate carboxykinase (ATP) (525 aa).

The substrate site is built by R52, Y186, and K192. Residues K192, H211, and 228-236 contribute to the ATP site; that span reads GLSGTGKTT. Mn(2+) contacts are provided by K192 and H211. Mn(2+) is bound at residue D249. ATP is bound by residues E277, R314, 433-434, and T439; that span reads RI. R314 contacts substrate.

This sequence belongs to the phosphoenolpyruvate carboxykinase (ATP) family. Mn(2+) serves as cofactor.

Its subcellular location is the cytoplasm. The enzyme catalyses oxaloacetate + ATP = phosphoenolpyruvate + ADP + CO2. Its pathway is carbohydrate biosynthesis; gluconeogenesis. Involved in the gluconeogenesis. Catalyzes the conversion of oxaloacetate (OAA) to phosphoenolpyruvate (PEP) through direct phosphoryl transfer between the nucleoside triphosphate and OAA. The chain is Phosphoenolpyruvate carboxykinase (ATP) from Fusobacterium nucleatum subsp. nucleatum (strain ATCC 25586 / DSM 15643 / BCRC 10681 / CIP 101130 / JCM 8532 / KCTC 2640 / LMG 13131 / VPI 4355).